An 81-amino-acid chain; its full sequence is Large ribosomal subunit protein bL27m (81 aa).

Positions methionine 1 to arginine 11 are enriched in polar residues. The segment at methionine 1–arginine 20 is disordered.

It belongs to the bacterial ribosomal protein bL27 family.

The protein localises to the mitochondrion. This Reclinomonas americana protein is Large ribosomal subunit protein bL27m (RPL27).